The primary structure comprises 466 residues: Soluble pyridine nucleotide transhydrogenase (466 aa).

Residue glutamate 36–cysteine 45 coordinates FAD.

The protein belongs to the class-I pyridine nucleotide-disulfide oxidoreductase family. Homooligomer; probable homooctamer. Requires FAD as cofactor.

It is found in the cytoplasm. It carries out the reaction NAD(+) + NADPH = NADH + NADP(+). In terms of biological role, conversion of NADPH, generated by peripheral catabolic pathways, to NADH, which can enter the respiratory chain for energy generation. The sequence is that of Soluble pyridine nucleotide transhydrogenase from Escherichia coli O6:H1 (strain CFT073 / ATCC 700928 / UPEC).